Consider the following 119-residue polypeptide: uncharacterized protein (119 aa).

Positions 64–119 are disordered; the sequence is SAPLGLKEVQKKSNEGLNEVQGAADINKQKRPANSQDSSSVEGDIQNFLEKVTGKN. Polar residues predominate over residues 95–104; the sequence is PANSQDSSSV.

This is an uncharacterized protein from Nostoc sp. (strain PCC 7120 / SAG 25.82 / UTEX 2576).